Reading from the N-terminus, the 337-residue chain is Ketol-acid reductoisomerase (NADP(+)) (337 aa).

A KARI N-terminal Rossmann domain is found at 1–180 (MQVYYDKDAD…GGTKGGVIET (180 aa)). NADP(+) contacts are provided by residues 24–27 (YGSQ), arginine 47, and serine 51. The active site involves histidine 106. Residue glycine 132 participates in NADP(+) binding. Residues 181-326 (TFREETETDL…AQLRAMMPWI (146 aa)) enclose the KARI C-terminal knotted domain. Aspartate 189, glutamate 193, glutamate 225, and glutamate 229 together coordinate Mg(2+). Substrate is bound at residue serine 250.

The protein belongs to the ketol-acid reductoisomerase family. It depends on Mg(2+) as a cofactor.

It carries out the reaction (2R)-2,3-dihydroxy-3-methylbutanoate + NADP(+) = (2S)-2-acetolactate + NADPH + H(+). The catalysed reaction is (2R,3R)-2,3-dihydroxy-3-methylpentanoate + NADP(+) = (S)-2-ethyl-2-hydroxy-3-oxobutanoate + NADPH + H(+). It functions in the pathway amino-acid biosynthesis; L-isoleucine biosynthesis; L-isoleucine from 2-oxobutanoate: step 2/4. Its pathway is amino-acid biosynthesis; L-valine biosynthesis; L-valine from pyruvate: step 2/4. In terms of biological role, involved in the biosynthesis of branched-chain amino acids (BCAA). Catalyzes an alkyl-migration followed by a ketol-acid reduction of (S)-2-acetolactate (S2AL) to yield (R)-2,3-dihydroxy-isovalerate. In the isomerase reaction, S2AL is rearranged via a Mg-dependent methyl migration to produce 3-hydroxy-3-methyl-2-ketobutyrate (HMKB). In the reductase reaction, this 2-ketoacid undergoes a metal-dependent reduction by NADPH to yield (R)-2,3-dihydroxy-isovalerate. This chain is Ketol-acid reductoisomerase (NADP(+)), found in Neisseria meningitidis serogroup A / serotype 4A (strain DSM 15465 / Z2491).